The chain runs to 330 residues: Glycerol-3-phosphate dehydrogenase [NAD(P)+] (330 aa).

NADPH contacts are provided by Ser10, Trp11, Arg31, and Lys105. Sn-glycerol 3-phosphate contacts are provided by Lys105, Gly135, and Ser137. Ala139 provides a ligand contact to NADPH. 5 residues coordinate sn-glycerol 3-phosphate: Lys190, Asp243, Ser253, Arg254, and Asn255. Lys190 serves as the catalytic Proton acceptor. Arg254 lines the NADPH pocket. Positions 278 and 280 each coordinate NADPH.

The protein belongs to the NAD-dependent glycerol-3-phosphate dehydrogenase family.

It localises to the cytoplasm. It carries out the reaction sn-glycerol 3-phosphate + NAD(+) = dihydroxyacetone phosphate + NADH + H(+). It catalyses the reaction sn-glycerol 3-phosphate + NADP(+) = dihydroxyacetone phosphate + NADPH + H(+). It participates in membrane lipid metabolism; glycerophospholipid metabolism. Catalyzes the reduction of the glycolytic intermediate dihydroxyacetone phosphate (DHAP) to sn-glycerol 3-phosphate (G3P), the key precursor for phospholipid synthesis. The protein is Glycerol-3-phosphate dehydrogenase [NAD(P)+] of Solidesulfovibrio magneticus (strain ATCC 700980 / DSM 13731 / RS-1) (Desulfovibrio magneticus).